The sequence spans 304 residues: uncharacterized protein (304 aa).

This sequence belongs to the mimivirus L137 family.

This is an uncharacterized protein from Acanthamoeba polyphaga mimivirus (APMV).